The chain runs to 359 residues: tRNA-specific 2-thiouridylase MnmA (359 aa).

ATP is bound by residues 9–16 (GLSGGVDS) and M35. Residues 95 to 97 (NPD) form an interaction with target base in tRNA region. The active-site Nucleophile is the C100. An intrachain disulfide couples C100 to C197. An ATP-binding site is contributed by G124. Residues 147 to 149 (KDQ) are interaction with tRNA. The Cysteine persulfide intermediate role is filled by C197. Residues 309-310 (RY) are interaction with tRNA.

It belongs to the MnmA/TRMU family.

Its subcellular location is the cytoplasm. The enzyme catalyses S-sulfanyl-L-cysteinyl-[protein] + uridine(34) in tRNA + AH2 + ATP = 2-thiouridine(34) in tRNA + L-cysteinyl-[protein] + A + AMP + diphosphate + H(+). In terms of biological role, catalyzes the 2-thiolation of uridine at the wobble position (U34) of tRNA, leading to the formation of s(2)U34. This Cupriavidus metallidurans (strain ATCC 43123 / DSM 2839 / NBRC 102507 / CH34) (Ralstonia metallidurans) protein is tRNA-specific 2-thiouridylase MnmA.